The primary structure comprises 176 residues: Ribosome maturation factor RimM (176 aa).

Residues 103–176 (QNDEYYFYEI…KIVVKELEWI (74 aa)) enclose the PRC barrel domain.

The protein belongs to the RimM family. Binds ribosomal protein uS19.

It is found in the cytoplasm. Functionally, an accessory protein needed during the final step in the assembly of 30S ribosomal subunit, possibly for assembly of the head region. Essential for efficient processing of 16S rRNA. May be needed both before and after RbfA during the maturation of 16S rRNA. It has affinity for free ribosomal 30S subunits but not for 70S ribosomes. This is Ribosome maturation factor RimM from Thermotoga neapolitana (strain ATCC 49049 / DSM 4359 / NBRC 107923 / NS-E).